A 341-amino-acid chain; its full sequence is Fructose-1,6-bisphosphatase class 1 1 (341 aa).

Residues E92, D114, L116, and D117 each contribute to the Mg(2+) site. Substrate contacts are provided by residues D117–S120, N209, and K275. E281 provides a ligand contact to Mg(2+).

Belongs to the FBPase class 1 family. Homotetramer. Requires Mg(2+) as cofactor.

The protein localises to the cytoplasm. It carries out the reaction beta-D-fructose 1,6-bisphosphate + H2O = beta-D-fructose 6-phosphate + phosphate. It functions in the pathway carbohydrate biosynthesis; gluconeogenesis. This is Fructose-1,6-bisphosphatase class 1 1 from Leptothrix cholodnii (strain ATCC 51168 / LMG 8142 / SP-6) (Leptothrix discophora (strain SP-6)).